We begin with the raw amino-acid sequence, 382 residues long: DNA replication and repair protein RecF (382 aa).

30–37 is a binding site for ATP; it reads GPNGHGKS.

The protein belongs to the RecF family.

It is found in the cytoplasm. The RecF protein is involved in DNA metabolism; it is required for DNA replication and normal SOS inducibility. RecF binds preferentially to single-stranded, linear DNA. It also seems to bind ATP. In Magnetococcus marinus (strain ATCC BAA-1437 / JCM 17883 / MC-1), this protein is DNA replication and repair protein RecF.